The primary structure comprises 239 residues: Purine nucleoside phosphorylase DeoD-type 1 (239 aa).

H5 is a binding site for a purine D-ribonucleoside. Residues G21, R25, R44, and 88-91 (RVGS) each bind phosphate. A purine D-ribonucleoside contacts are provided by residues 180 to 182 (EME) and 204 to 205 (SD). D205 (proton donor) is an active-site residue.

The protein belongs to the PNP/UDP phosphorylase family. As to quaternary structure, homohexamer; trimer of homodimers.

It carries out the reaction a purine D-ribonucleoside + phosphate = a purine nucleobase + alpha-D-ribose 1-phosphate. It catalyses the reaction a purine 2'-deoxy-D-ribonucleoside + phosphate = a purine nucleobase + 2-deoxy-alpha-D-ribose 1-phosphate. Its function is as follows. Catalyzes the reversible phosphorolytic breakdown of the N-glycosidic bond in the beta-(deoxy)ribonucleoside molecules, with the formation of the corresponding free purine bases and pentose-1-phosphate. This Vibrio vulnificus (strain CMCP6) protein is Purine nucleoside phosphorylase DeoD-type 1.